We begin with the raw amino-acid sequence, 184 residues long: Ribonuclease HII (184 aa).

The 183-residue stretch at 2-184 (AKICGIDEAG…KPKLAQSSLF (183 aa)) folds into the RNase H type-2 domain. A divalent metal cation contacts are provided by aspartate 8, glutamate 9, and aspartate 95.

The protein belongs to the RNase HII family. Mn(2+) is required as a cofactor. Requires Mg(2+) as cofactor.

It is found in the cytoplasm. It catalyses the reaction Endonucleolytic cleavage to 5'-phosphomonoester.. Endonuclease that specifically degrades the RNA of RNA-DNA hybrids. This is Ribonuclease HII from Campylobacter concisus (strain 13826).